Here is a 134-residue protein sequence, read N- to C-terminus: Estradiol 17-beta-dehydrogenase 8 (134 aa).

Ser38 serves as a coordination point for substrate. Lys42 carries the post-translational modification N6-succinyllysine. The active-site Proton acceptor is Tyr51. Residues 51 to 55 and 84 to 86 contribute to the NAD(+) site; these read YAASK and IAT. Lys55 carries the post-translational modification N6-succinyllysine.

The protein belongs to the short-chain dehydrogenases/reductases (SDR) family. Heterotetramer with CBR4; contains two molecules of HSD17B8 and CBR4.

The protein resides in the mitochondrion matrix. The enzyme catalyses 17beta-estradiol + NAD(+) = estrone + NADH + H(+). It carries out the reaction 17beta-estradiol + NADP(+) = estrone + NADPH + H(+). The catalysed reaction is testosterone + NAD(+) = androst-4-ene-3,17-dione + NADH + H(+). The protein operates within steroid biosynthesis; estrogen biosynthesis. It functions in the pathway lipid metabolism; fatty acid biosynthesis. Its function is as follows. NAD-dependent 17-beta-hydroxysteroid dehydrogenase with highest activity towards estradiol. Has very low activity towards testosterone. The heterotetramer with CBR4 has NADH-dependent 3-ketoacyl-acyl carrier protein reductase activity, and thereby plays a role in mitochondrial fatty acid biosynthesis. Within the heterotetramer, HSD17B8 binds NADH; CBR4 binds NADPD. This Callithrix jacchus (White-tufted-ear marmoset) protein is Estradiol 17-beta-dehydrogenase 8 (HSD17B8).